Here is a 406-residue protein sequence, read N- to C-terminus: Protease ElaD (406 aa).

The active site involves His234. Cys316 functions as the Nucleophile in the catalytic mechanism.

The protein belongs to the peptidase C79 family.

Its function is as follows. Protease that can act as an efficient and specific deubiquitinating enzyme in vitro. Does not possess desumoylating and deneddylating activities. The physiological substrate is unknown. In Escherichia coli O139:H28 (strain E24377A / ETEC), this protein is Protease ElaD (elaD).